The primary structure comprises 288 residues: Shikimate dehydrogenase (NADP(+)) (288 aa).

Residues Ser-14–Ser-16 and Thr-63 contribute to the shikimate site. The Proton acceptor role is filled by Lys-67. Glu-79 serves as a coordination point for NADP(+). Asn-88 and Asp-103 together coordinate shikimate. Residues Gly-127–Ala-131, Asn-151–Lys-156, and Met-219 contribute to the NADP(+) site. Tyr-221 serves as a coordination point for shikimate. Residue Gly-242 participates in NADP(+) binding.

This sequence belongs to the shikimate dehydrogenase family. Homodimer.

The catalysed reaction is shikimate + NADP(+) = 3-dehydroshikimate + NADPH + H(+). Its pathway is metabolic intermediate biosynthesis; chorismate biosynthesis; chorismate from D-erythrose 4-phosphate and phosphoenolpyruvate: step 4/7. Involved in the biosynthesis of the chorismate, which leads to the biosynthesis of aromatic amino acids. Catalyzes the reversible NADPH linked reduction of 3-dehydroshikimate (DHSA) to yield shikimate (SA). This Caldicellulosiruptor bescii (strain ATCC BAA-1888 / DSM 6725 / KCTC 15123 / Z-1320) (Anaerocellum thermophilum) protein is Shikimate dehydrogenase (NADP(+)).